Consider the following 91-residue polypeptide: Small ribosomal subunit protein uS15 (91 aa).

It belongs to the universal ribosomal protein uS15 family. Part of the 30S ribosomal subunit. Forms a bridge to the 50S subunit in the 70S ribosome, contacting the 23S rRNA.

One of the primary rRNA binding proteins, it binds directly to 16S rRNA where it helps nucleate assembly of the platform of the 30S subunit by binding and bridging several RNA helices of the 16S rRNA. Its function is as follows. Forms an intersubunit bridge (bridge B4) with the 23S rRNA of the 50S subunit in the ribosome. The chain is Small ribosomal subunit protein uS15 from Deinococcus geothermalis (strain DSM 11300 / CIP 105573 / AG-3a).